The following is a 268-amino-acid chain: Hemin import ATP-binding protein HmuV (268 aa).

Residues 5-242 (IEARHLSKRA…ETIRDIFEID (238 aa)) enclose the ABC transporter domain. ATP is bound at residue 37 to 44 (GPNGAGKS).

The protein belongs to the ABC transporter superfamily. Heme (hemin) importer (TC 3.A.1.14.5) family. The complex is composed of two ATP-binding proteins (HmuV), two transmembrane proteins (HmuU) and a solute-binding protein (HmuT).

The protein localises to the cell inner membrane. In terms of biological role, part of the ABC transporter complex HmuTUV involved in hemin import. Responsible for energy coupling to the transport system. This Bradyrhizobium diazoefficiens (strain JCM 10833 / BCRC 13528 / IAM 13628 / NBRC 14792 / USDA 110) protein is Hemin import ATP-binding protein HmuV.